The primary structure comprises 201 residues: Adenylyl-sulfate kinase (201 aa).

35–42 (GLSGSGKS) provides a ligand contact to ATP. Residue S109 is the Phosphoserine intermediate of the active site.

The protein belongs to the APS kinase family.

The catalysed reaction is adenosine 5'-phosphosulfate + ATP = 3'-phosphoadenylyl sulfate + ADP + H(+). Its pathway is sulfur metabolism; hydrogen sulfide biosynthesis; sulfite from sulfate: step 2/3. Its function is as follows. Catalyzes the synthesis of activated sulfate. The protein is Adenylyl-sulfate kinase of Salmonella paratyphi C (strain RKS4594).